The sequence spans 515 residues: GMP synthase [glutamine-hydrolyzing] (515 aa).

The Glutamine amidotransferase type-1 domain occupies 10 to 200 (TIIVLDFGSQ…VFGVCGCSEG (191 aa)). Cys-87 serves as the catalytic Nucleophile. Catalysis depends on residues His-174 and Glu-176. A GMPS ATP-PPase domain is found at 201–390 (WNMENFIEVE…LGIPDEIVWR (190 aa)). 228–234 (SGGVDSS) is an ATP binding site.

In terms of assembly, homodimer.

It catalyses the reaction XMP + L-glutamine + ATP + H2O = GMP + L-glutamate + AMP + diphosphate + 2 H(+). The protein operates within purine metabolism; GMP biosynthesis; GMP from XMP (L-Gln route): step 1/1. Its function is as follows. Catalyzes the synthesis of GMP from XMP. The polypeptide is GMP synthase [glutamine-hydrolyzing] (Bacillus cereus (strain ATCC 14579 / DSM 31 / CCUG 7414 / JCM 2152 / NBRC 15305 / NCIMB 9373 / NCTC 2599 / NRRL B-3711)).